The primary structure comprises 136 residues: Aspartate 1-decarboxylase (136 aa).

S25 serves as the catalytic Schiff-base intermediate with substrate; via pyruvic acid. S25 carries the pyruvic acid (Ser) modification. Residue T57 participates in substrate binding. The Proton donor role is filled by Y58. A substrate-binding site is contributed by G73 to A75.

The protein belongs to the PanD family. As to quaternary structure, heterooctamer of four alpha and four beta subunits. Pyruvate serves as cofactor. Post-translationally, is synthesized initially as an inactive proenzyme, which is activated by self-cleavage at a specific serine bond to produce a beta-subunit with a hydroxyl group at its C-terminus and an alpha-subunit with a pyruvoyl group at its N-terminus.

It is found in the cytoplasm. It catalyses the reaction L-aspartate + H(+) = beta-alanine + CO2. It functions in the pathway cofactor biosynthesis; (R)-pantothenate biosynthesis; beta-alanine from L-aspartate: step 1/1. Catalyzes the pyruvoyl-dependent decarboxylation of aspartate to produce beta-alanine. In Mycolicibacterium smegmatis (strain ATCC 700084 / mc(2)155) (Mycobacterium smegmatis), this protein is Aspartate 1-decarboxylase.